A 101-amino-acid chain; its full sequence is Large ribosomal subunit protein bL27 (101 aa).

Residues 1-21 are disordered; it reads MAHKKAGGSSRNGRDSRSKRL.

Belongs to the bacterial ribosomal protein bL27 family.

The protein is Large ribosomal subunit protein bL27 of Buchnera aphidicola subsp. Cinara cedri (strain Cc).